The chain runs to 887 residues: Alanine--tRNA ligase (887 aa).

Residues H564, H568, C676, and H680 each contribute to the Zn(2+) site. The interval 854 to 873 (GQGGGGRPDMAQSGGPKGNK) is disordered.

It belongs to the class-II aminoacyl-tRNA synthetase family. Zn(2+) is required as a cofactor.

Its subcellular location is the cytoplasm. It catalyses the reaction tRNA(Ala) + L-alanine + ATP = L-alanyl-tRNA(Ala) + AMP + diphosphate. Its function is as follows. Catalyzes the attachment of alanine to tRNA(Ala) in a two-step reaction: alanine is first activated by ATP to form Ala-AMP and then transferred to the acceptor end of tRNA(Ala). Also edits incorrectly charged Ser-tRNA(Ala) and Gly-tRNA(Ala) via its editing domain. The protein is Alanine--tRNA ligase of Bartonella henselae (strain ATCC 49882 / DSM 28221 / CCUG 30454 / Houston 1) (Rochalimaea henselae).